A 663-amino-acid chain; its full sequence is uncharacterized protein (663 aa).

Residue 207–214 (GPPGTGKT) participates in ATP binding.

The protein belongs to the DNA2/NAM7 helicase family.

This is an uncharacterized protein from Methanocaldococcus jannaschii (strain ATCC 43067 / DSM 2661 / JAL-1 / JCM 10045 / NBRC 100440) (Methanococcus jannaschii).